Here is a 514-residue protein sequence, read N- to C-terminus: piRNA biogenesis protein EXD1 (514 aa).

A 3'-5' exonuclease domain is found at 30 to 122; it reads LHAERTWMEK…HGKLCWLQVA (93 aa). Positions 384 to 422 are disordered; the sequence is SLNKQATNPQHLPPTEEGETSEDSSNKLICTKSKGSEDQ.

Belongs to the EXD1 family. As to quaternary structure, homodimer. Component of the PET complex, at least composed of EXD1, PIWIL2, TDRD12 and piRNAs.

Its subcellular location is the cytoplasm. RNA-binding component of the PET complex, a multiprotein complex required for the processing of piRNAs during spermatogenesis. The piRNA metabolic process mediates the repression of transposable elements during meiosis by forming complexes composed of piRNAs and Piwi proteins and governs the methylation and subsequent repression of transposable elements, preventing their mobilization, which is essential for the germline integrity. The PET complex is required during the secondary piRNAs metabolic process for the PIWIL2 slicing-triggered loading of PIWIL4 piRNAs. In the PET complex, EXD1 probably acts as an RNA adapter. EXD1 is an inactive exonuclease. This Homo sapiens (Human) protein is piRNA biogenesis protein EXD1 (EXD1).